The following is a 63-amino-acid chain: Prokaryotic ubiquitin-like protein UBact (63 aa).

The segment at 1 to 63 (MSGRSTFGRF…SRRYRQRTGE (63 aa)) is disordered. A compositionally biased stretch (basic and acidic residues) spans 17 to 50 (PWERKPGDDEGGPKRPKVERPDTNDLLKRMRRVD). Residue Glu63 forms an Isoglutamyl lysine isopeptide (Glu-Lys) (interchain with K-? in acceptor proteins) linkage.

The protein belongs to the ubiquitin-like protein UBact family.

Functionally, may function as a protein modifier covalently attached to lysine residues of substrate proteins. This may serve to target the modified proteins for degradation by proteasomes. This Handelsmanbacteria sp. (strain RIFCSPLOWO2_12_FULL_64_10) protein is Prokaryotic ubiquitin-like protein UBact.